The chain runs to 618 residues: uncharacterized protein (618 aa).

This sequence to Rhizobium NGR234A y4qD.

This is an uncharacterized protein from Sinorhizobium fredii (strain NBRC 101917 / NGR234).